A 413-amino-acid polypeptide reads, in one-letter code: Protein trichome birefringence-like 31 (413 aa).

The helical; Signal-anchor for type II membrane protein transmembrane segment at 12–34 threads the bilayer; that stretch reads IQSIFQVVLVSLLVLGSVRWILD. The GDS motif motif lies at 141 to 143; it reads GDS. The short motif at 384 to 398 is the DCXHWCLPGXXDXWN motif element; it reads DCIHWCLPGVPDTWN.

It belongs to the PC-esterase family. TBL subfamily.

The protein resides in the membrane. May act as a bridging protein that binds pectin and other cell wall polysaccharides. Probably involved in maintaining esterification of pectins. May be involved in the specific O-acetylation of cell wall polymers. This Arabidopsis thaliana (Mouse-ear cress) protein is Protein trichome birefringence-like 31 (TBL31).